The primary structure comprises 547 residues: Chaperonin GroEL (547 aa).

ATP is bound by residues 30 to 33 (TLGP), K51, 87 to 91 (DGTTT), G415, 479 to 481 (NAA), and D495.

Belongs to the chaperonin (HSP60) family. As to quaternary structure, forms a cylinder of 14 subunits composed of two heptameric rings stacked back-to-back. Interacts with the co-chaperonin GroES.

The protein resides in the cytoplasm. It catalyses the reaction ATP + H2O + a folded polypeptide = ADP + phosphate + an unfolded polypeptide.. Together with its co-chaperonin GroES, plays an essential role in assisting protein folding. The GroEL-GroES system forms a nano-cage that allows encapsulation of the non-native substrate proteins and provides a physical environment optimized to promote and accelerate protein folding. The sequence is that of Chaperonin GroEL from Bordetella pertussis (strain Tohama I / ATCC BAA-589 / NCTC 13251).